A 61-amino-acid chain; its full sequence is Small ribosomal subunit protein uS14 (61 aa).

Cys-24, Cys-27, Cys-40, and Cys-43 together coordinate Zn(2+).

It belongs to the universal ribosomal protein uS14 family. Zinc-binding uS14 subfamily. Part of the 30S ribosomal subunit. Contacts proteins S3 and S10. Requires Zn(2+) as cofactor.

Its function is as follows. Binds 16S rRNA, required for the assembly of 30S particles and may also be responsible for determining the conformation of the 16S rRNA at the A site. This Streptococcus thermophilus (strain ATCC BAA-491 / LMD-9) protein is Small ribosomal subunit protein uS14.